The sequence spans 277 residues: Large ribosomal subunit protein uL2 (277 aa).

Disordered regions lie at residues K37–H60 and V223–D265. Residues S39–I49 are compositionally biased toward polar residues. Residues T50–H60 show a composition bias toward basic residues. Residues D229–E244 are compositionally biased toward basic and acidic residues.

The protein belongs to the universal ribosomal protein uL2 family. Part of the 50S ribosomal subunit. Forms a bridge to the 30S subunit in the 70S ribosome.

Functionally, one of the primary rRNA binding proteins. Required for association of the 30S and 50S subunits to form the 70S ribosome, for tRNA binding and peptide bond formation. It has been suggested to have peptidyltransferase activity; this is somewhat controversial. Makes several contacts with the 16S rRNA in the 70S ribosome. The protein is Large ribosomal subunit protein uL2 of Neisseria meningitidis serogroup A / serotype 4A (strain DSM 15465 / Z2491).